Consider the following 665-residue polypeptide: MQDVKKRVEKLHDLLNQYSYEYYVQDNPSVPDSEYDKLLHELIEIEEKYPEFKSTDSPTVRVGGEAQSSFEKVNHDTPMLSLGNAFNEEDLRKFDQRIRDSIGKVEYMCELKIDGLAVSLKYENGRFVQGLTRGDGTTGEDITENLRTIHAIPLKIKEPLNFEVRGEAYMPRRSFIHLNNEKEQNGEQPFANPRNAAAGSLRQLDSKLAAKRKLSVFLYSVNDLTEFNATTQSEALEELDQLGFKTNQERERVSDIEGVLNYIEKWTSKRGSLSYDIDGIVIKVNDLSQQEEMGYTQKSPRWAIAYKFPAEEVITKLLDIELSIGRTGVVTPTAILEPVKVAGTTVSRASLHNEDLIHERDIRIGDSVVIKKAGDIIPEVVKSILDRRPNESEIYHMPTHCPSCGHELVRIEGEVALRCINPKCQAQLIEGLIHFVSRQAMNIDGLGTKIIHQLYENQLIKDVADIFYLKEEDLLPLERMGKKKVDNLLLAIEKSKEQSLEHLLFGLGIRHLGVKASQVLAERYETMDQLFKVTESELIEIQDIGDKLAQSVVTYLENSDIRSLIEKLSNKNVNMSYKGIKTTEIEGHPDFSGKTIVLTGKLEQMTRNEASEWLKMQGAKVTSSVTKSTDIVIAGADAGSKLAKAEKYGTEIWTEAAFIEKQNGI.

NAD(+) is bound by residues 32 to 36 (DSEYD), 81 to 82 (SL), and Glu110. Residue Lys112 is the N6-AMP-lysine intermediate of the active site. Residues Arg133, Glu167, Lys283, and Lys307 each coordinate NAD(+). Zn(2+) is bound by residues Cys401, Cys404, Cys419, and Cys424. A BRCT domain is found at 586–665 (EGHPDFSGKT…AAFIEKQNGI (80 aa)).

This sequence belongs to the NAD-dependent DNA ligase family. LigA subfamily. Mg(2+) serves as cofactor. It depends on Mn(2+) as a cofactor.

The catalysed reaction is NAD(+) + (deoxyribonucleotide)n-3'-hydroxyl + 5'-phospho-(deoxyribonucleotide)m = (deoxyribonucleotide)n+m + AMP + beta-nicotinamide D-nucleotide.. Its function is as follows. DNA ligase that catalyzes the formation of phosphodiester linkages between 5'-phosphoryl and 3'-hydroxyl groups in double-stranded DNA using NAD as a coenzyme and as the energy source for the reaction. It is essential for DNA replication and repair of damaged DNA. This Staphylococcus epidermidis (strain ATCC 12228 / FDA PCI 1200) protein is DNA ligase.